A 459-amino-acid polypeptide reads, in one-letter code: MQIQFHLYNTLSRTKEVFNPQDQANVKMYVCGPTVYYNPHIGNSRSGVVYDLLYRIVIKIFGEKAVKYVRNITDVDDKIIDRAALLGVTIDELTDKVTKEFHKNMAYLGCMLPSIEPKATKHIDVMIAIIERLIAKDHAYIADNHVYFDVLSAPNYTELSNRNLEEMFEGVHVENSKTKKNPQDFVLWKPAKQNESANMNFESPWGLGRPGWHIECSAMSYKYLGENFDIHGGGADLIFPHHTNEIAQSRCAFPSSTYAKYWVHNGFLTVNGEKMSKSLGNFITVRDLMDKQIQGEVVRLFLLSSHYRRPLDYNDKAIEDAKKTLDYWYRAIENINVQKIDLPHDFMQSLLDDMNTPLAVKIINDYAKGVFISKTEEERQLNASAIITCANFIGLMNKTPHEWFNSGVDELYVNELVNKRLEAKKQKNWLLADQIRNQLLEEKIILEDRPDGTTIWRKE.

Position 31 (C31) interacts with Zn(2+). The 'HIGH' region signature appears at 33-43 (PTVYYNPHIGN). Zn(2+)-binding residues include C216, H241, and E245. A 'KMSKS' region motif is present at residues 274-278 (KMSKS). K277 is an ATP binding site.

It belongs to the class-I aminoacyl-tRNA synthetase family. In terms of assembly, monomer. The cofactor is Zn(2+).

It is found in the cytoplasm. It carries out the reaction tRNA(Cys) + L-cysteine + ATP = L-cysteinyl-tRNA(Cys) + AMP + diphosphate. In Rickettsia conorii (strain ATCC VR-613 / Malish 7), this protein is Cysteine--tRNA ligase.